The chain runs to 163 residues: Large ribosomal subunit protein eL24y (163 aa).

Residues 119–133 show a composition bias toward basic and acidic residues; it reads IKKTKDEKKAKKVEF. Positions 119-163 are disordered; the sequence is IKKTKDEKKAKKVEFASKQQKVKANFPKAAAASKGPKVGGGGGKR.

The protein belongs to the eukaryotic ribosomal protein eL24 family. As to quaternary structure, interacts with REIL1 and REIL2. Component of the large ribosomal subunit. Ubiquitous.

The protein localises to the cytoplasm. It is found in the nucleus. The protein resides in the nucleolus. It localises to the nucleoplasm. Its function is as follows. Might have an extraribosomal function in reinitiation of translation of ETTIN and MONOPTEROS genes that are involved in the auxin-mediated gynoecium patterning. Essential in leaf polarity establishment, probably having a role for translation in leaf dorsoventral patterning to specify leaf adaxial identity. The polypeptide is Large ribosomal subunit protein eL24y (Arabidopsis thaliana (Mouse-ear cress)).